A 155-amino-acid chain; its full sequence is Small ribosomal subunit protein eS19 (155 aa).

It belongs to the eukaryotic ribosomal protein eS19 family. In terms of assembly, component of the small ribosomal subunit.

The protein localises to the cytoplasm. Its function is as follows. Component of the small ribosomal subunit. The ribosome is a large ribonucleoprotein complex responsible for the synthesis of proteins in the cell. Required for proper maturation of the small (40S) ribosomal subunit. The protein is Small ribosomal subunit protein eS19 (RPS19) of Entamoeba histolytica (strain ATCC 30459 / HM-1:IMSS / ABRM).